The sequence spans 142 residues: Hemoglobin subunit alpha-5 (142 aa).

Positions threonine 2–arginine 142 constitute a Globin domain. Residue histidine 59 coordinates O2. Residue histidine 88 coordinates heme b.

Belongs to the globin family. As to quaternary structure, heterotetramer of two alpha chains and two beta chains. As to expression, red blood cells.

This is a larval (tadpole) alpha-globin. The protein is Hemoglobin subunit alpha-5 (hba5) of Xenopus laevis (African clawed frog).